Reading from the N-terminus, the 638-residue chain is Threonine--tRNA ligase (638 aa).

The 61-residue stretch at 1–61 (MPDIKLPDGS…EQNADLAIIT (61 aa)) folds into the TGS domain. Residues 242–533 (DHRRLGKQYD…LIENFAGALP (292 aa)) form a catalytic region. Residues Cys333, His384, and His510 each contribute to the Zn(2+) site.

It belongs to the class-II aminoacyl-tRNA synthetase family. In terms of assembly, homodimer. It depends on Zn(2+) as a cofactor.

The protein resides in the cytoplasm. The enzyme catalyses tRNA(Thr) + L-threonine + ATP = L-threonyl-tRNA(Thr) + AMP + diphosphate + H(+). In terms of biological role, catalyzes the attachment of threonine to tRNA(Thr) in a two-step reaction: L-threonine is first activated by ATP to form Thr-AMP and then transferred to the acceptor end of tRNA(Thr). Also edits incorrectly charged L-seryl-tRNA(Thr). This Dechloromonas aromatica (strain RCB) protein is Threonine--tRNA ligase.